The primary structure comprises 110 residues: Small ribosomal subunit protein eS24 (110 aa).

Positions 91-110 are disordered; the sequence is RNKVEEQAEEAEEAEAGAAE. Positions 97 to 110 are enriched in acidic residues; the sequence is QAEEAEEAEAGAAE.

Belongs to the eukaryotic ribosomal protein eS24 family.

The sequence is that of Small ribosomal subunit protein eS24 from Archaeoglobus fulgidus (strain ATCC 49558 / DSM 4304 / JCM 9628 / NBRC 100126 / VC-16).